The following is a 497-amino-acid chain: Glycerol kinase (497 aa).

Residue Thr13 participates in ADP binding. Residues Thr13, Thr14, and Ser15 each coordinate ATP. A sn-glycerol 3-phosphate-binding site is contributed by Thr13. An ADP-binding site is contributed by Arg17. Sn-glycerol 3-phosphate contacts are provided by Arg83, Glu84, and Tyr135. Residues Arg83, Glu84, and Tyr135 each contribute to the glycerol site. A Phosphohistidine; by HPr modification is found at His231. Asp245 contributes to the sn-glycerol 3-phosphate binding site. Positions 245 and 246 each coordinate glycerol. ADP contacts are provided by Thr267 and Gly310. Positions 267, 310, 314, and 411 each coordinate ATP. Gly411 and Asn415 together coordinate ADP.

It belongs to the FGGY kinase family. Homotetramer and homodimer (in equilibrium). In terms of processing, the phosphoenolpyruvate-dependent sugar phosphotransferase system (PTS), including enzyme I, and histidine-containing protein (HPr) are required for the phosphorylation, which leads to the activation of the enzyme.

The enzyme catalyses glycerol + ATP = sn-glycerol 3-phosphate + ADP + H(+). The protein operates within polyol metabolism; glycerol degradation via glycerol kinase pathway; sn-glycerol 3-phosphate from glycerol: step 1/1. With respect to regulation, activated by phosphorylation and inhibited by fructose 1,6-bisphosphate (FBP). Functionally, key enzyme in the regulation of glycerol uptake and metabolism. Catalyzes the phosphorylation of glycerol to yield sn-glycerol 3-phosphate. The protein is Glycerol kinase of Listeria monocytogenes serotype 4b (strain F2365).